We begin with the raw amino-acid sequence, 129 residues long: UPF0148 protein AF_2370 (129 aa).

A disordered region spans residues 61 to 80; sequence SAAKAESEEKPPESTKPAVK.

It belongs to the UPF0148 family.

The sequence is that of UPF0148 protein AF_2370 from Archaeoglobus fulgidus (strain ATCC 49558 / DSM 4304 / JCM 9628 / NBRC 100126 / VC-16).